Consider the following 291-residue polypeptide: Formamidopyrimidine-DNA glycosylase (291 aa).

The active-site Schiff-base intermediate with DNA is the Pro2. The active-site Proton donor is the Glu3. Lys61 acts as the Proton donor; for beta-elimination activity in catalysis. Residues His103, Arg123, and Arg165 each contribute to the DNA site. Residues 251-285 (EVYGRGGQACSRCASTIRRDAFMNRSSFSCPACQP) form an FPG-type zinc finger. Catalysis depends on Arg275, which acts as the Proton donor; for delta-elimination activity.

This sequence belongs to the FPG family. In terms of assembly, monomer. Zn(2+) serves as cofactor.

It carries out the reaction Hydrolysis of DNA containing ring-opened 7-methylguanine residues, releasing 2,6-diamino-4-hydroxy-5-(N-methyl)formamidopyrimidine.. The enzyme catalyses 2'-deoxyribonucleotide-(2'-deoxyribose 5'-phosphate)-2'-deoxyribonucleotide-DNA = a 3'-end 2'-deoxyribonucleotide-(2,3-dehydro-2,3-deoxyribose 5'-phosphate)-DNA + a 5'-end 5'-phospho-2'-deoxyribonucleoside-DNA + H(+). Its function is as follows. Involved in base excision repair of DNA damaged by oxidation or by mutagenic agents. Acts as a DNA glycosylase that recognizes and removes damaged bases. Has a preference for oxidized purines, such as 7,8-dihydro-8-oxoguanine (8-oxoG). Has AP (apurinic/apyrimidinic) lyase activity and introduces nicks in the DNA strand. Cleaves the DNA backbone by beta-delta elimination to generate a single-strand break at the site of the removed base with both 3'- and 5'-phosphates. The polypeptide is Formamidopyrimidine-DNA glycosylase (Parafrankia sp. (strain EAN1pec)).